Consider the following 302-residue polypeptide: Sulfate adenylyltransferase subunit 2 (302 aa).

The protein belongs to the PAPS reductase family. CysD subfamily. As to quaternary structure, heterodimer composed of CysD, the smaller subunit, and CysN.

The enzyme catalyses sulfate + ATP + H(+) = adenosine 5'-phosphosulfate + diphosphate. It participates in sulfur metabolism; hydrogen sulfide biosynthesis; sulfite from sulfate: step 1/3. Its function is as follows. With CysN forms the ATP sulfurylase (ATPS) that catalyzes the adenylation of sulfate producing adenosine 5'-phosphosulfate (APS) and diphosphate, the first enzymatic step in sulfur assimilation pathway. APS synthesis involves the formation of a high-energy phosphoric-sulfuric acid anhydride bond driven by GTP hydrolysis by CysN coupled to ATP hydrolysis by CysD. The sequence is that of Sulfate adenylyltransferase subunit 2 from Shewanella halifaxensis (strain HAW-EB4).